Consider the following 122-residue polypeptide: Conotoxin flf14c (122 aa).

Residues 1 to 22 (MGFRVLVLIVMVTTSALPFTFS) form the signal peptide. The propeptide occupies 23-96 (EESGRSPFRP…AESPVGQKRW (74 aa)). The interval 53–89 (RADGQTPDMHQPEMRRPEMRRPEVRRPEVRQPEFAES) is disordered. Residues 62–85 (HQPEMRRPEMRRPEVRRPEVRQPE) show a composition bias toward basic and acidic residues. 2 disulfide bridges follow: cysteine 101/cysteine 121 and cysteine 105/cysteine 117.

Expressed by the venom duct.

The protein resides in the secreted. The polypeptide is Conotoxin flf14c (Conus anabathrum floridanus (Florida cone)).